A 476-amino-acid polypeptide reads, in one-letter code: Bifunctional protein HldE (476 aa).

The interval 1–319 is ribokinase; it reads MKISLPAFEK…AALNLSHGES (319 aa). 195 to 198 serves as a coordination point for ATP; it reads NMSE. Residue aspartate 264 is part of the active site. A cytidylyltransferase region spans residues 345 to 476; sequence MTNGCFDILH…AIIENIMAKQ (132 aa).

This sequence in the N-terminal section; belongs to the carbohydrate kinase PfkB family. It in the C-terminal section; belongs to the cytidylyltransferase family. Homodimer.

It carries out the reaction D-glycero-beta-D-manno-heptose 7-phosphate + ATP = D-glycero-beta-D-manno-heptose 1,7-bisphosphate + ADP + H(+). The enzyme catalyses D-glycero-beta-D-manno-heptose 1-phosphate + ATP + H(+) = ADP-D-glycero-beta-D-manno-heptose + diphosphate. It functions in the pathway nucleotide-sugar biosynthesis; ADP-L-glycero-beta-D-manno-heptose biosynthesis; ADP-L-glycero-beta-D-manno-heptose from D-glycero-beta-D-manno-heptose 7-phosphate: step 1/4. Its pathway is nucleotide-sugar biosynthesis; ADP-L-glycero-beta-D-manno-heptose biosynthesis; ADP-L-glycero-beta-D-manno-heptose from D-glycero-beta-D-manno-heptose 7-phosphate: step 3/4. In terms of biological role, catalyzes the phosphorylation of D-glycero-D-manno-heptose 7-phosphate at the C-1 position to selectively form D-glycero-beta-D-manno-heptose-1,7-bisphosphate. Catalyzes the ADP transfer from ATP to D-glycero-beta-D-manno-heptose 1-phosphate, yielding ADP-D-glycero-beta-D-manno-heptose. The sequence is that of Bifunctional protein HldE from Shewanella loihica (strain ATCC BAA-1088 / PV-4).